The following is a 393-amino-acid chain: Acetate kinase (393 aa).

Mg(2+) is bound at residue Asn-7. Position 14 (Lys-14) interacts with ATP. Arg-90 provides a ligand contact to substrate. Residue Asp-147 is the Proton donor/acceptor of the active site. Residues His-205–Gly-209, Asp-280–Arg-282, and Gly-328–Asn-332 contribute to the ATP site. Glu-380 lines the Mg(2+) pocket.

This sequence belongs to the acetokinase family. As to quaternary structure, homodimer. Mg(2+) is required as a cofactor. Requires Mn(2+) as cofactor.

It is found in the cytoplasm. The enzyme catalyses acetate + ATP = acetyl phosphate + ADP. It participates in metabolic intermediate biosynthesis; acetyl-CoA biosynthesis; acetyl-CoA from acetate: step 1/2. Catalyzes the formation of acetyl phosphate from acetate and ATP. Can also catalyze the reverse reaction. This Finegoldia magna (strain ATCC 29328 / DSM 20472 / WAL 2508) (Peptostreptococcus magnus) protein is Acetate kinase.